The sequence spans 429 residues: UDP-N-acetylglucosamine 1-carboxyvinyltransferase (429 aa).

22-23 (KN) serves as a coordination point for phosphoenolpyruvate. R102 lines the UDP-N-acetyl-alpha-D-glucosamine pocket. The active-site Proton donor is the C126. C126 carries the 2-(S-cysteinyl)pyruvic acid O-phosphothioketal modification. UDP-N-acetyl-alpha-D-glucosamine contacts are provided by residues 131–135 (RPVDL), D316, and I338.

This sequence belongs to the EPSP synthase family. MurA subfamily.

It is found in the cytoplasm. The catalysed reaction is phosphoenolpyruvate + UDP-N-acetyl-alpha-D-glucosamine = UDP-N-acetyl-3-O-(1-carboxyvinyl)-alpha-D-glucosamine + phosphate. Its pathway is cell wall biogenesis; peptidoglycan biosynthesis. Its function is as follows. Cell wall formation. Adds enolpyruvyl to UDP-N-acetylglucosamine. The chain is UDP-N-acetylglucosamine 1-carboxyvinyltransferase from Rhodopseudomonas palustris (strain BisB18).